The chain runs to 396 residues: Activity-regulated cytoskeleton-associated protein (396 aa).

Residues 54–78 adopt a coiled-coil conformation; that stretch reads SKQVERELKGLHRSVGKLESNLDGY. The tract at residues 89-100 is interaction with SH3GL1 or SH3GL3; it reads KSIKACLCRCQE. The tract at residues 195–214 is interaction with DNM2; the sequence is QPWVPGEDGQPSPGVDTQIF. Position 260 is a phosphoserine (serine 260). Residues lysine 268 and lysine 269 each participate in a glycyl lysine isopeptide (Lys-Gly) (interchain with G-Cter in ubiquitin) cross-link. Phosphothreonine is present on threonine 278. A disordered region spans residues 356–396; the sequence is QDDLEQAAEPAGPHLPVEDEAETLTPAPNSESVASDRTQPE. Polar residues predominate over residues 381 to 396; the sequence is PAPNSESVASDRTQPE.

This sequence belongs to the ARC/ARG3.1 family. In terms of assembly, homooligomer; homooligomerizes into virion-like capsids. Interacts with SH3GL1/endophilin-2, SH3GL3/endophilin-3 and DNM2/DYN2. Interacts with CAMK2B (in the kinase inactive state); leading to target ARC to inactive synapses. Interacts with PSEN1. Post-translationally, palmitoylation anchors the protein into the membrane by allowing direct insertion into the hydrophobic core of the lipid bilayer. Ubiquitinated by UBE3A, leading to its degradation by the proteasome, thereby promoting AMPA receptors (AMPARs) expression at synapses. Ubiquitinated by RNF216 at Lys-268 and Lys-269 limiting ARC protein levels induced by synaptic activity and thus regulating ARC-dependent forms of synaptic plasticity. In terms of processing, phosphorylation at Ser-260 by CaMK2 prevents homooligomerization into virion-like capsids by disrupting an interaction surface essential for high-order oligomerization. Phosphorylation by CaMK2 inhibits synaptic activity.

It localises to the extracellular vesicle membrane. The protein localises to the postsynaptic cell membrane. Its subcellular location is the synapse. The protein resides in the postsynaptic density. It is found in the early endosome membrane. It localises to the cell projection. The protein localises to the dendrite. Its subcellular location is the cytoplasm. The protein resides in the cytoskeleton. It is found in the cell cortex. It localises to the dendritic spine. The protein localises to the cytoplasmic vesicle. Its subcellular location is the secretory vesicle. The protein resides in the acrosome. It is found in the clathrin-coated vesicle membrane. Master regulator of synaptic plasticity that self-assembles into virion-like capsids that encapsulate RNAs and mediate intercellular RNA transfer in the nervous system. ARC protein is released from neurons in extracellular vesicles that mediate the transfer of ARC mRNA into new target cells, where ARC mRNA can undergo activity-dependent translation. ARC capsids are endocytosed and are able to transfer ARC mRNA into the cytoplasm of neurons. Acts as a key regulator of synaptic plasticity: required for protein synthesis-dependent forms of long-term potentiation (LTP) and depression (LTD) and for the formation of long-term memory. Regulates synaptic plasticity by promoting endocytosis of AMPA receptors (AMPARs) in response to synaptic activity: this endocytic pathway maintains levels of surface AMPARs in response to chronic changes in neuronal activity through synaptic scaling, thereby contributing to neuronal homeostasis. Acts as a postsynaptic mediator of activity-dependent synapse elimination in the developing cerebellum by mediating elimination of surplus climbing fiber synapses. Accumulates at weaker synapses, probably to prevent their undesired enhancement. This suggests that ARC-containing virion-like capsids may be required to eliminate synaptic material. Required to transduce experience into long-lasting changes in visual cortex plasticity and for long-term memory. Involved in postsynaptic trafficking and processing of amyloid-beta A4 (APP) via interaction with PSEN1. In addition to its role in synapses, also involved in the regulation of the immune system: specifically expressed in skin-migratory dendritic cells and regulates fast dendritic cell migration, thereby regulating T-cell activation. The sequence is that of Activity-regulated cytoskeleton-associated protein from Homo sapiens (Human).